We begin with the raw amino-acid sequence, 286 residues long: Bifunctional protein FolD (286 aa).

Residues 165–167 (GRS), Ser190, and Val231 each bind NADP(+).

It belongs to the tetrahydrofolate dehydrogenase/cyclohydrolase family. As to quaternary structure, homodimer.

It carries out the reaction (6R)-5,10-methylene-5,6,7,8-tetrahydrofolate + NADP(+) = (6R)-5,10-methenyltetrahydrofolate + NADPH. The enzyme catalyses (6R)-5,10-methenyltetrahydrofolate + H2O = (6R)-10-formyltetrahydrofolate + H(+). Its pathway is one-carbon metabolism; tetrahydrofolate interconversion. Its function is as follows. Catalyzes the oxidation of 5,10-methylenetetrahydrofolate to 5,10-methenyltetrahydrofolate and then the hydrolysis of 5,10-methenyltetrahydrofolate to 10-formyltetrahydrofolate. This is Bifunctional protein FolD from Bacillus cereus (strain G9842).